The following is a 290-amino-acid chain: GTPase Era (290 aa).

The Era-type G domain maps to 2–144 (KVLKVGVLGP…AIILEEFKPQ (143 aa)). Positions 10–17 (GPTNAGKS) are G1. GTP is bound at residue 10–17 (GPTNAGKS). The G2 stretch occupies residues 36–40 (NTTLL). Residues 58-61 (DVPG) are G3. GTP is bound at residue 58 to 62 (DVPGF). Positions 97 to 100 (NKIE) are G4. A G5 region spans residues 121 to 123 (INK). 122 to 125 (NKFH) contributes to the GTP binding site. Positions 201–279 (CKNEIPHIAR…FIDIFVKTEK (79 aa)) constitute a KH type-2 domain.

It belongs to the TRAFAC class TrmE-Era-EngA-EngB-Septin-like GTPase superfamily. Era GTPase family. As to quaternary structure, monomer.

The protein resides in the cytoplasm. Its subcellular location is the cell membrane. Its function is as follows. An essential GTPase that binds both GDP and GTP, with rapid nucleotide exchange. Plays a role in 16S rRNA processing and 30S ribosomal subunit biogenesis and possibly also in cell cycle regulation and energy metabolism. The polypeptide is GTPase Era (Mycoplasma genitalium (strain ATCC 33530 / DSM 19775 / NCTC 10195 / G37) (Mycoplasmoides genitalium)).